Reading from the N-terminus, the 555-residue chain is CTP synthase (555 aa).

Residues 1–271 (MVKRGKKTKY…DDKLAELFNI (271 aa)) are amidoligase domain. Ser-19 lines the CTP pocket. Residue Ser-19 coordinates UTP. ATP contacts are provided by residues 20 to 25 (SLGKGL) and Asp-77. Residues Asp-77 and Glu-145 each contribute to the Mg(2+) site. CTP is bound by residues 152–154 (DIE), 192–197 (KTKPTQ), and Lys-228. UTP-binding positions include 192 to 197 (KTKPTQ) and Lys-228. The Glutamine amidotransferase type-1 domain maps to 297 to 537 (RIGIVGKYVE…VKAALEHRDA (241 aa)). Gly-358 contributes to the L-glutamine binding site. Cys-385 (nucleophile; for glutamine hydrolysis) is an active-site residue. L-glutamine-binding positions include 386–389 (LGLQ), Glu-409, and Arg-466. Active-site residues include His-510 and Glu-512. Residues 536–555 (DAQQRQPSAEVKKLPVGKNG) are disordered.

It belongs to the CTP synthase family. Homotetramer.

The catalysed reaction is UTP + L-glutamine + ATP + H2O = CTP + L-glutamate + ADP + phosphate + 2 H(+). It carries out the reaction L-glutamine + H2O = L-glutamate + NH4(+). The enzyme catalyses UTP + NH4(+) + ATP = CTP + ADP + phosphate + 2 H(+). It participates in pyrimidine metabolism; CTP biosynthesis via de novo pathway; CTP from UDP: step 2/2. With respect to regulation, allosterically activated by GTP, when glutamine is the substrate; GTP has no effect on the reaction when ammonia is the substrate. The allosteric effector GTP functions by stabilizing the protein conformation that binds the tetrahedral intermediate(s) formed during glutamine hydrolysis. Inhibited by the product CTP, via allosteric rather than competitive inhibition. Its function is as follows. Catalyzes the ATP-dependent amination of UTP to CTP with either L-glutamine or ammonia as the source of nitrogen. Regulates intracellular CTP levels through interactions with the four ribonucleotide triphosphates. This is CTP synthase from Anaeromyxobacter dehalogenans (strain 2CP-C).